A 260-amino-acid polypeptide reads, in one-letter code: Thymidylate synthase (260 aa).

The protein operates within pyrimidine metabolism; dTTP biosynthesis. Functionally, is able to catalyze the biosynthesis of dTMP using dUMP, tetrahydrofolate and formaldehyde in vitro, i.e. a reaction equivalent to that catalyzed by bacterial thymidylate synthases (EC 2.1.1.45). However, M.jannaschii like most methanogenic Archaea lacks folates, thus the physiological cosubstrate is unknown but is likely one of the non-methylated methanopterin biosynthetic intermediates. The sequence is that of Thymidylate synthase from Methanocaldococcus jannaschii (strain ATCC 43067 / DSM 2661 / JAL-1 / JCM 10045 / NBRC 100440) (Methanococcus jannaschii).